Reading from the N-terminus, the 288-residue chain is Glycine--tRNA ligase alpha subunit (288 aa).

It belongs to the class-II aminoacyl-tRNA synthetase family. As to quaternary structure, tetramer of two alpha and two beta subunits.

Its subcellular location is the cytoplasm. It catalyses the reaction tRNA(Gly) + glycine + ATP = glycyl-tRNA(Gly) + AMP + diphosphate. The polypeptide is Glycine--tRNA ligase alpha subunit (Rickettsia rickettsii (strain Iowa)).